Consider the following 156-residue polypeptide: ATP synthase subunit b (156 aa).

The chain crosses the membrane as a helical span at residues L7–L29.

This sequence belongs to the ATPase B chain family. In terms of assembly, F-type ATPases have 2 components, F(1) - the catalytic core - and F(0) - the membrane proton channel. F(1) has five subunits: alpha(3), beta(3), gamma(1), delta(1), epsilon(1). F(0) has three main subunits: a(1), b(2) and c(10-14). The alpha and beta chains form an alternating ring which encloses part of the gamma chain. F(1) is attached to F(0) by a central stalk formed by the gamma and epsilon chains, while a peripheral stalk is formed by the delta and b chains.

Its subcellular location is the cell inner membrane. Its function is as follows. F(1)F(0) ATP synthase produces ATP from ADP in the presence of a proton or sodium gradient. F-type ATPases consist of two structural domains, F(1) containing the extramembraneous catalytic core and F(0) containing the membrane proton channel, linked together by a central stalk and a peripheral stalk. During catalysis, ATP synthesis in the catalytic domain of F(1) is coupled via a rotary mechanism of the central stalk subunits to proton translocation. Functionally, component of the F(0) channel, it forms part of the peripheral stalk, linking F(1) to F(0). This is ATP synthase subunit b from Burkholderia vietnamiensis (strain G4 / LMG 22486) (Burkholderia cepacia (strain R1808)).